A 416-amino-acid polypeptide reads, in one-letter code: Gamma-glutamyl phosphate reductase (416 aa).

The protein belongs to the gamma-glutamyl phosphate reductase family.

It is found in the cytoplasm. It carries out the reaction L-glutamate 5-semialdehyde + phosphate + NADP(+) = L-glutamyl 5-phosphate + NADPH + H(+). The protein operates within amino-acid biosynthesis; L-proline biosynthesis; L-glutamate 5-semialdehyde from L-glutamate: step 2/2. Functionally, catalyzes the NADPH-dependent reduction of L-glutamate 5-phosphate into L-glutamate 5-semialdehyde and phosphate. The product spontaneously undergoes cyclization to form 1-pyrroline-5-carboxylate. This Streptococcus thermophilus (strain CNRZ 1066) protein is Gamma-glutamyl phosphate reductase.